The sequence spans 213 residues: Thymidylate kinase (213 aa).

Glycine 10 to threonine 17 is an ATP binding site.

Belongs to the thymidylate kinase family.

It catalyses the reaction dTMP + ATP = dTDP + ADP. Functionally, phosphorylation of dTMP to form dTDP in both de novo and salvage pathways of dTTP synthesis. This is Thymidylate kinase from Enterobacter sp. (strain 638).